The primary structure comprises 242 residues: Type III pantothenate kinase (242 aa).

Residue 5-12 (DLGNTRLK) participates in ATP binding. Residues Tyr94 and 100-103 (GCDR) contribute to the substrate site. Asp102 acts as the Proton acceptor in catalysis. Thr124 provides a ligand contact to ATP. Thr175 contributes to the substrate binding site.

It belongs to the type III pantothenate kinase family. As to quaternary structure, homodimer. NH4(+) serves as cofactor. It depends on K(+) as a cofactor.

It is found in the cytoplasm. The enzyme catalyses (R)-pantothenate + ATP = (R)-4'-phosphopantothenate + ADP + H(+). Its pathway is cofactor biosynthesis; coenzyme A biosynthesis; CoA from (R)-pantothenate: step 1/5. Functionally, catalyzes the phosphorylation of pantothenate (Pan), the first step in CoA biosynthesis. This is Type III pantothenate kinase from Psychrobacter cryohalolentis (strain ATCC BAA-1226 / DSM 17306 / VKM B-2378 / K5).